The chain runs to 506 residues: Maturase K (506 aa).

This sequence belongs to the intron maturase 2 family. MatK subfamily.

It is found in the plastid. Its subcellular location is the chloroplast. In terms of biological role, usually encoded in the trnK tRNA gene intron. Probably assists in splicing its own and other chloroplast group II introns. This is Maturase K from Erica tetralix (Cross-leaved heath).